Reading from the N-terminus, the 953-residue chain is Coatomer subunit beta-1 (953 aa).

HEAT repeat units follow at residues 49-87 (ETLP…RDVA), 93-127 (PEMI…LNEP), 128-165 (ELLE…LPHG), 314-351 (DVMV…PRNV), and 393-430 (EVAG…TNPK).

In terms of assembly, oligomeric complex that consists of at least the alpha, beta, beta', gamma, delta, epsilon and zeta subunits.

It is found in the cytoplasm. It localises to the golgi apparatus membrane. The protein localises to the cytoplasmic vesicle. The protein resides in the COPI-coated vesicle membrane. Its function is as follows. The coatomer is a cytosolic protein complex that binds to dilysine motifs and reversibly associates with Golgi non-clathrin-coated vesicles, which further mediate biosynthetic protein transport from the ER, via the Golgi up to the trans Golgi network. Coatomer complex is required for budding from Golgi membranes, and is essential for the retrograde Golgi-to-ER transport of dilysine-tagged proteins. The polypeptide is Coatomer subunit beta-1 (Oryza sativa subsp. japonica (Rice)).